Here is a 268-residue protein sequence, read N- to C-terminus: ELL-associated factor 1 (268 aa).

The interval 106-268 (IQVKKTRAEG…LSESGSDSDD (163 aa)) is disordered. Residues 128–154 (ARPPQPSQPPPPPPPMPFRAPTKPPAG) are compositionally biased toward pro residues. Serine 165 carries the phosphoserine modification. Basic and acidic residues predominate over residues 171 to 181 (DDIKRELRAEV). The necessary for transactivation activity stretch occupies residues 182–262 (DIIEQMSSSS…LRNDLQLSES (81 aa)). Residues 188–203 (SSSSGSSSSDSESSSG) are compositionally biased toward low complexity. A compositionally biased stretch (polar residues) spans 238-268 (NGTSRPQGSSQLMNTLRNDLQLSESGSDSDD).

The protein belongs to the EAF family. As to quaternary structure, component of the super elongation complex (SEC), at least composed of EAF1, EAF2, CDK9, MLLT3/AF9, AFF (AFF1 or AFF4), the P-TEFb complex and ELL (ELL, ELL2 or ELL3). Interacts with ELL and ELL2.

Its subcellular location is the nucleus speckle. The protein resides in the nucleus. It is found in the cajal body. Acts as a transcriptional transactivator of ELL and ELL2 elongation activities. This chain is ELL-associated factor 1 (Eaf1), found in Mus musculus (Mouse).